The sequence spans 425 residues: Serine--tRNA ligase (425 aa).

233–235 (TAE) contributes to the L-serine binding site. 264-266 (RAE) contributes to the ATP binding site. Glutamate 287 is a binding site for L-serine. Position 351–354 (351–354 (EISS)) interacts with ATP. Serine 387 serves as a coordination point for L-serine.

The protein belongs to the class-II aminoacyl-tRNA synthetase family. Type-1 seryl-tRNA synthetase subfamily. In terms of assembly, homodimer. The tRNA molecule binds across the dimer.

It is found in the cytoplasm. It carries out the reaction tRNA(Ser) + L-serine + ATP = L-seryl-tRNA(Ser) + AMP + diphosphate + H(+). The enzyme catalyses tRNA(Sec) + L-serine + ATP = L-seryl-tRNA(Sec) + AMP + diphosphate + H(+). Its pathway is aminoacyl-tRNA biosynthesis; selenocysteinyl-tRNA(Sec) biosynthesis; L-seryl-tRNA(Sec) from L-serine and tRNA(Sec): step 1/1. In terms of biological role, catalyzes the attachment of serine to tRNA(Ser). Is also able to aminoacylate tRNA(Sec) with serine, to form the misacylated tRNA L-seryl-tRNA(Sec), which will be further converted into selenocysteinyl-tRNA(Sec). In Clostridium botulinum (strain Eklund 17B / Type B), this protein is Serine--tRNA ligase.